Reading from the N-terminus, the 550-residue chain is Hydroxylamine reductase (550 aa).

Residues Cys3, Cys6, Cys18, and Cys25 each coordinate [2Fe-2S] cluster. 8 residues coordinate hybrid [4Fe-2O-2S] cluster: His249, Glu273, Cys317, Cys405, Cys433, Cys458, Glu492, and Lys494. At Cys405 the chain carries Cysteine persulfide.

Belongs to the HCP family. Requires [2Fe-2S] cluster as cofactor. It depends on hybrid [4Fe-2O-2S] cluster as a cofactor.

It localises to the cytoplasm. It catalyses the reaction A + NH4(+) + H2O = hydroxylamine + AH2 + H(+). In terms of biological role, catalyzes the reduction of hydroxylamine to form NH(3) and H(2)O. The protein is Hydroxylamine reductase of Escherichia fergusonii (strain ATCC 35469 / DSM 13698 / CCUG 18766 / IAM 14443 / JCM 21226 / LMG 7866 / NBRC 102419 / NCTC 12128 / CDC 0568-73).